The chain runs to 309 residues: Methyltransferase AacuQ (309 aa).

The tract at residues 57–149 (DVGAGNGPYA…QLRPGGTFAC (93 aa)) is methyltransferase domain.

This sequence belongs to the methyltransferase superfamily.

The protein operates within secondary metabolite biosynthesis. Its function is as follows. Methyltransferase; part of the gene cluster that mediates the biosynthesis of the tetrahydroxanthone dimer secalonic acid D. The pathway begins with the synthesis of atrochrysone thioester by the polyketide synthase AacuL. The atrochrysone carboxyl ACP thioesterase AacuM then breaks the thioester bond and releases the atrochrysone carboxylic acid from AacuL. Atrochrysone carboxylic acid is decarboxylated by the decarboxylase AacuI, and oxidized by the anthrone oxygenase AacuG to yield emodin. Emodin is then reduced to emodin hydroquinone by a yet unidentified oxidoreductase. A-ring reduction by the short chain dehydrogenase AacuN, dehydration by the scytalone dehydratase-like protein AacuK and probable spontaneous re-oxidation, results in overall deoxygenation to chrysophanol. Baeyer-Villiger oxidation by the Baeyer-Villiger monooxygenase (BVMO) AacuH then yields monodictyphenone. Monodictyphenone is transformed into compounds with the tetrahydroxanthone skeleton via methylesterification by the methyltransferase AacuQ, followed by the action of the flavin-dependent monooxygenase AacuC, the isomerase AacuP, and the short chain dehydrogenase/reductase AacuF or AacuD. AacuF and AacuD should accept the same compound as a substrate but perform the ketoreduction with a different stereoselectivity, thus yielding blennolides B and A, respectively. In the final step of the biosynthesis, the cytochrome P450 monooxygenase AacuE accepts blennolide B and/or blennolide A to conduct the dimerization reaction to furnish the tetrahydroxanthone dimers, secalonic acids D, B, and F. The polypeptide is Methyltransferase AacuQ (Aspergillus aculeatus (strain ATCC 16872 / CBS 172.66 / WB 5094)).